Here is a 523-residue protein sequence, read N- to C-terminus: GMP synthase [glutamine-hydrolyzing] (523 aa).

Positions 8-205 constitute a Glutamine amidotransferase type-1 domain; the sequence is KILILDFGSQ…VVNICGCETK (198 aa). Catalysis depends on Cys-85, which acts as the Nucleophile. Active-site residues include His-179 and Glu-181. Residues 206–398 form the GMPS ATP-PPase domain; sequence WTAENIIEDA…LGLPAEMINR (193 aa). Residue 233–239 participates in ATP binding; that stretch reads SGGVDSS.

As to quaternary structure, homodimer.

The catalysed reaction is XMP + L-glutamine + ATP + H2O = GMP + L-glutamate + AMP + diphosphate + 2 H(+). It participates in purine metabolism; GMP biosynthesis; GMP from XMP (L-Gln route): step 1/1. Functionally, catalyzes the synthesis of GMP from XMP. This is GMP synthase [glutamine-hydrolyzing] from Haemophilus influenzae (strain 86-028NP).